Consider the following 418-residue polypeptide: Serum response factor homolog A (418 aa).

Disordered stretches follow at residues 14-67 (LGNV…GKKA), 144-170 (CLNT…LLQQ), 301-351 (RLGK…NNNS), and 388-418 (SSSS…FPPC). 2 stretches are compositionally biased toward low complexity: residues 22-39 (PSSP…PTST) and 51-61 (TSEPSSPSTGE). Positions 67–127 (AGRRKIKIEF…GHVYTFATAK (61 aa)) constitute an MADS-box domain. 3 stretches are compositionally biased toward low complexity: residues 150-170 (NPNS…LLQQ), 306-351 (NNNN…NNNS), and 388-399 (SSSSASSSPASP). Residues 400-418 (NQFNYSNHSMPLNNQFPPC) are compositionally biased toward polar residues.

The protein localises to the nucleus. In terms of biological role, required for proper slug migration, spore differentiation and stalk differentiation (under nonbuffered conditions). Could be involved in late events of spore maturation necessary for spore stability. The polypeptide is Serum response factor homolog A (srfA) (Dictyostelium discoideum (Social amoeba)).